We begin with the raw amino-acid sequence, 264 residues long: Thiazole synthase (264 aa).

Lys106 functions as the Schiff-base intermediate with DXP in the catalytic mechanism. 1-deoxy-D-xylulose 5-phosphate-binding positions include Gly167, 193–194 (AG), and 215–216 (NT).

This sequence belongs to the ThiG family. Homotetramer. Forms heterodimers with either ThiH or ThiS.

The protein resides in the cytoplasm. The enzyme catalyses [ThiS sulfur-carrier protein]-C-terminal-Gly-aminoethanethioate + 2-iminoacetate + 1-deoxy-D-xylulose 5-phosphate = [ThiS sulfur-carrier protein]-C-terminal Gly-Gly + 2-[(2R,5Z)-2-carboxy-4-methylthiazol-5(2H)-ylidene]ethyl phosphate + 2 H2O + H(+). It participates in cofactor biosynthesis; thiamine diphosphate biosynthesis. Functionally, catalyzes the rearrangement of 1-deoxy-D-xylulose 5-phosphate (DXP) to produce the thiazole phosphate moiety of thiamine. Sulfur is provided by the thiocarboxylate moiety of the carrier protein ThiS. In vitro, sulfur can be provided by H(2)S. In Xanthomonas campestris pv. campestris (strain 8004), this protein is Thiazole synthase.